We begin with the raw amino-acid sequence, 147 residues long: Small ribosomal subunit protein uS5 (147 aa).

The S5 DRBM domain occupies 9–72 (FQEVVVNIGR…DDAFKNLIHV (64 aa)).

It belongs to the universal ribosomal protein uS5 family. As to quaternary structure, part of the 30S ribosomal subunit. Contacts proteins S4 and S8.

With S4 and S12 plays an important role in translational accuracy. Functionally, located at the back of the 30S subunit body where it stabilizes the conformation of the head with respect to the body. In Helicobacter pylori (strain J99 / ATCC 700824) (Campylobacter pylori J99), this protein is Small ribosomal subunit protein uS5.